Consider the following 77-residue polypeptide: Large ribosomal subunit protein bL28 (77 aa).

The protein belongs to the bacterial ribosomal protein bL28 family.

In Polynucleobacter necessarius subsp. necessarius (strain STIR1), this protein is Large ribosomal subunit protein bL28.